The primary structure comprises 218 residues: Glutathione S-transferase (218 aa).

A GST N-terminal domain is found at Ser3–Gly88. Residues Tyr9–Trp10, Arg43–Trp46, Lys50, Asn59–Leu60, and Gln72–Thr73 contribute to the glutathione site. The GST C-terminal domain occupies Asn90 to Phe206. Tyr116 contacts substrate.

The protein belongs to the GST superfamily. Mu family.

It catalyses the reaction RX + glutathione = an S-substituted glutathione + a halide anion + H(+). Its function is as follows. Conjugation of reduced glutathione to a wide number of exogenous and endogenous hydrophobic electrophiles. This Tyrophagus putrescentiae (Mold mite) protein is Glutathione S-transferase.